The sequence spans 681 residues: Threonine--tRNA ligase (681 aa).

Positions 3–97 constitute a TGS domain; sequence KQIQVTLPDG…EEDVQLALLT (95 aa). The segment at 279 to 576 is catalytic; that stretch reads DHRVLGKQLD…LIEHYAGAFP (298 aa). Zn(2+) is bound by residues cysteine 372, histidine 423, and histidine 553.

Belongs to the class-II aminoacyl-tRNA synthetase family. In terms of assembly, homodimer. Requires Zn(2+) as cofactor.

The protein resides in the cytoplasm. The catalysed reaction is tRNA(Thr) + L-threonine + ATP = L-threonyl-tRNA(Thr) + AMP + diphosphate + H(+). Functionally, catalyzes the attachment of threonine to tRNA(Thr) in a two-step reaction: L-threonine is first activated by ATP to form Thr-AMP and then transferred to the acceptor end of tRNA(Thr). Also edits incorrectly charged L-seryl-tRNA(Thr). This is Threonine--tRNA ligase from Acidobacterium capsulatum (strain ATCC 51196 / DSM 11244 / BCRC 80197 / JCM 7670 / NBRC 15755 / NCIMB 13165 / 161).